Consider the following 394-residue polypeptide: Putative gustatory receptor 22a (394 aa).

The Cytoplasmic portion of the chain corresponds to 1-16 (MSQPKRIHRICKGLAR). Residues 17 to 37 (FTIRATLYGSWVLGLFPFTFD) form a helical membrane-spanning segment. Residues 38 to 47 (SRKRRLNRSK) are Extracellular-facing. An N-linked (GlcNAc...) asparagine glycan is attached at Asn44. Residues 48-68 (WLLAYGLVLNLTLLVLSMLPS) form a helical membrane-spanning segment. Over 69–148 (TDDHNSVKVE…HTFNRYVIEK (80 aa)) the chain is Cytoplasmic. Residues 149–169 (GLVIILEIGSSLVLYFGIPNS) form a helical membrane-spanning segment. Lys170 is a topological domain (extracellular). The chain crosses the membrane as a helical span at residues 171 to 191 (IVVYEAVCIYIVQLEVLMVVM). The Cytoplasmic segment spans residues 192–256 (HFHLAVIYIY…TAIYDIQVTL (65 aa)). Residues 257–277 (FMATLFSVNIIVGHVLVICWI) traverse the membrane as a helical segment. Asn278 carries an N-linked (GlcNAc...) asparagine glycan. The Extracellular portion of the chain corresponds to 278–281 (NITR). The helical transmembrane segment at 282–302 (FSLLVIFLLFPQALIINFWDL) threads the bilayer. The Cytoplasmic portion of the chain corresponds to 303 to 361 (WQGIAFCDLAESTGKKTSMILKLFNDMENMDQETERRVTEFTLFCSHRRLKVCHLGLLD). The chain crosses the membrane as a helical span at residues 362-382 (INYEMGFRMIITNILYVVFLV). The Extracellular segment spans residues 383–394 (QFDYMNLKFKTD).

It belongs to the insect chemoreceptor superfamily. Gustatory receptor (GR) family. Gr22e subfamily. In terms of tissue distribution, expressed in neurons of the terminal external chemosensory organ of larvae.

It localises to the cell membrane. In terms of biological role, probable gustatory receptor which mediates acceptance or avoidance behavior, depending on its substrates. This chain is Putative gustatory receptor 22a (Gr22a), found in Drosophila melanogaster (Fruit fly).